The chain runs to 452 residues: UDP-N-acetylmuramoylalanine--D-glutamate ligase (452 aa).

An ATP-binding site is contributed by Gly-115–Thr-121.

This sequence belongs to the MurCDEF family.

Its subcellular location is the cytoplasm. The enzyme catalyses UDP-N-acetyl-alpha-D-muramoyl-L-alanine + D-glutamate + ATP = UDP-N-acetyl-alpha-D-muramoyl-L-alanyl-D-glutamate + ADP + phosphate + H(+). It functions in the pathway cell wall biogenesis; peptidoglycan biosynthesis. Its function is as follows. Cell wall formation. Catalyzes the addition of glutamate to the nucleotide precursor UDP-N-acetylmuramoyl-L-alanine (UMA). In Geobacter sp. (strain M21), this protein is UDP-N-acetylmuramoylalanine--D-glutamate ligase.